A 269-amino-acid polypeptide reads, in one-letter code: Aminoglycoside (3'') (9) adenylyltransferase (269 aa).

The enzyme catalyses streptomycin + ATP = 3''-O-adenylylstreptomycin + diphosphate. It carries out the reaction spectinomycin + ATP = 9-O-adenylylspectinomycin + diphosphate. Mediates bacterial resistance to the antibiotic spectinomycin and probably also to streptomycin. The sequence is that of Aminoglycoside (3'') (9) adenylyltransferase from Rhizobium radiobacter (Agrobacterium tumefaciens).